The following is a 281-amino-acid chain: Pantothenate synthetase (281 aa).

30–37 is an ATP binding site; sequence MGALHRGH. Catalysis depends on His-37, which acts as the Proton donor. Position 61 (Gln-61) interacts with (R)-pantoate. Gln-61 is a beta-alanine binding site. 147-150 serves as a coordination point for ATP; it reads GEKD. Gln-153 is a (R)-pantoate binding site. Residues Ile-176 and 184 to 187 contribute to the ATP site; that span reads LSSR.

This sequence belongs to the pantothenate synthetase family. As to quaternary structure, homodimer.

Its subcellular location is the cytoplasm. The catalysed reaction is (R)-pantoate + beta-alanine + ATP = (R)-pantothenate + AMP + diphosphate + H(+). It functions in the pathway cofactor biosynthesis; (R)-pantothenate biosynthesis; (R)-pantothenate from (R)-pantoate and beta-alanine: step 1/1. In terms of biological role, catalyzes the condensation of pantoate with beta-alanine in an ATP-dependent reaction via a pantoyl-adenylate intermediate. The chain is Pantothenate synthetase from Porphyromonas gingivalis (strain ATCC BAA-308 / W83).